The chain runs to 236 residues: Sugar fermentation stimulation protein homolog (236 aa).

Belongs to the SfsA family.

In Desulfotalea psychrophila (strain LSv54 / DSM 12343), this protein is Sugar fermentation stimulation protein homolog.